The sequence spans 478 residues: Aspartyl/glutamyl-tRNA(Asn/Gln) amidotransferase subunit B (478 aa).

Belongs to the GatB/GatE family. GatB subfamily. In terms of assembly, heterotrimer of A, B and C subunits.

The enzyme catalyses L-glutamyl-tRNA(Gln) + L-glutamine + ATP + H2O = L-glutaminyl-tRNA(Gln) + L-glutamate + ADP + phosphate + H(+). It carries out the reaction L-aspartyl-tRNA(Asn) + L-glutamine + ATP + H2O = L-asparaginyl-tRNA(Asn) + L-glutamate + ADP + phosphate + 2 H(+). Allows the formation of correctly charged Asn-tRNA(Asn) or Gln-tRNA(Gln) through the transamidation of misacylated Asp-tRNA(Asn) or Glu-tRNA(Gln) in organisms which lack either or both of asparaginyl-tRNA or glutaminyl-tRNA synthetases. The reaction takes place in the presence of glutamine and ATP through an activated phospho-Asp-tRNA(Asn) or phospho-Glu-tRNA(Gln). This is Aspartyl/glutamyl-tRNA(Asn/Gln) amidotransferase subunit B from Lachnoclostridium phytofermentans (strain ATCC 700394 / DSM 18823 / ISDg) (Clostridium phytofermentans).